Here is a 94-residue protein sequence, read N- to C-terminus: MSFIPIVCGMKSFDSSYDTVPGHQNLYCPNCHNYSVGPIKRKEFFTIWFIPLVPVFWGKQLHCPICNWRQDFKNDEQLNKVIQEQQNLRQKQPN.

The protein belongs to the UPF0768 family.

It is found in the cell membrane. The protein is UPF0768 protein YBL029C-A of Saccharomyces cerevisiae (strain ATCC 204508 / S288c) (Baker's yeast).